Reading from the N-terminus, the 944-residue chain is Leucine--tRNA ligase (944 aa).

Positions 40–51 match the 'HIGH' region motif; that stretch reads PYPSGAGLHVGH. The short motif at 718-722 is the 'KMSKS' region element; it reads KMSKS. Lys-721 contacts ATP.

Belongs to the class-I aminoacyl-tRNA synthetase family.

The protein resides in the cytoplasm. The enzyme catalyses tRNA(Leu) + L-leucine + ATP = L-leucyl-tRNA(Leu) + AMP + diphosphate. The sequence is that of Leucine--tRNA ligase from Phocaeicola vulgatus (strain ATCC 8482 / DSM 1447 / JCM 5826 / CCUG 4940 / NBRC 14291 / NCTC 11154) (Bacteroides vulgatus).